A 274-amino-acid chain; its full sequence is Undecaprenyl-diphosphatase (274 aa).

The next 7 membrane-spanning stretches (helical) occupy residues 4-24 (PLFV…FLPI), 41-61 (DATS…AVCW), 83-103 (FVGL…MFHS), 108-128 (LLFN…LILW), 184-204 (AAEF…VYDL), 218-238 (VFAI…KAFI), and 246-266 (FIAF…TWQL).

Belongs to the UppP family.

The protein resides in the cell inner membrane. The catalysed reaction is di-trans,octa-cis-undecaprenyl diphosphate + H2O = di-trans,octa-cis-undecaprenyl phosphate + phosphate + H(+). Functionally, catalyzes the dephosphorylation of undecaprenyl diphosphate (UPP). Confers resistance to bacitracin. This is Undecaprenyl-diphosphatase from Aromatoleum aromaticum (strain DSM 19018 / LMG 30748 / EbN1) (Azoarcus sp. (strain EbN1)).